Consider the following 247-residue polypeptide: Elongation factor Ts (247 aa).

An involved in Mg(2+) ion dislocation from EF-Tu region spans residues 82–85 (TDFV).

The protein belongs to the EF-Ts family.

It is found in the cytoplasm. Associates with the EF-Tu.GDP complex and induces the exchange of GDP to GTP. It remains bound to the aminoacyl-tRNA.EF-Tu.GTP complex up to the GTP hydrolysis stage on the ribosome. This is Elongation factor Ts (tsf) from Arthrospira platensis (Spirulina platensis).